A 209-amino-acid chain; its full sequence is Small ribosomal subunit protein uS4 (209 aa).

The S4 RNA-binding domain maps to 99 to 159 (SRLDSVCYRM…EKSKAQLRIK (61 aa)).

The protein belongs to the universal ribosomal protein uS4 family. In terms of assembly, part of the 30S ribosomal subunit. Contacts protein S5. The interaction surface between S4 and S5 is involved in control of translational fidelity.

Its function is as follows. One of the primary rRNA binding proteins, it binds directly to 16S rRNA where it nucleates assembly of the body of the 30S subunit. In terms of biological role, with S5 and S12 plays an important role in translational accuracy. This is Small ribosomal subunit protein uS4 from Thiobacillus denitrificans (strain ATCC 25259 / T1).